The sequence spans 57 residues: MLSWVVTFLIIALIAGILGFGGLAGASVEIAKIIFFIAVILFVVSAVVGLLRGRTRV.

Transmembrane regions (helical) follow at residues 4–24 (WVVT…GGLA) and 30–50 (IAKI…VVGL).

The protein belongs to the UPF0391 family.

The protein localises to the cell membrane. The chain is UPF0391 membrane protein Nham_2738 from Nitrobacter hamburgensis (strain DSM 10229 / NCIMB 13809 / X14).